The sequence spans 350 residues: Flap endonuclease 1 (350 aa).

The interval 1 to 102 (MGVTALRELI…REIERRQKLK (102 aa)) is N-domain. Residues aspartate 31, aspartate 84, glutamate 156, glutamate 158, aspartate 177, aspartate 179, and aspartate 240 each contribute to the Mg(2+) site. Residues 120 to 261 (EARKYAQMSA…TALRYVKSYG (142 aa)) form an I-domain region. The interaction with PCNA stretch occupies residues 339–347 (KQSTLDMFF).

It belongs to the XPG/RAD2 endonuclease family. FEN1 subfamily. Interacts with PCNA. PCNA stimulates the nuclease activity without altering cleavage specificity. The cofactor is Mg(2+).

In terms of biological role, structure-specific nuclease with 5'-flap endonuclease and 5'-3' exonuclease activities involved in DNA replication and repair. During DNA replication, cleaves the 5'-overhanging flap structure that is generated by displacement synthesis when DNA polymerase encounters the 5'-end of a downstream Okazaki fragment. Binds the unpaired 3'-DNA end and kinks the DNA to facilitate 5' cleavage specificity. Cleaves one nucleotide into the double-stranded DNA from the junction in flap DNA, leaving a nick for ligation. Also involved in the base excision repair (BER) pathway. Acts as a genome stabilization factor that prevents flaps from equilibrating into structures that lead to duplications and deletions. Also possesses 5'-3' exonuclease activity on nicked or gapped double-stranded DNA. The polypeptide is Flap endonuclease 1 (Ignicoccus hospitalis (strain KIN4/I / DSM 18386 / JCM 14125)).